The primary structure comprises 88 residues: Translation initiation factor IF-1 2 (88 aa).

The 72-residue stretch at 1 to 72 (MAKEELIELQ…TKGRINFRHK (72 aa)) folds into the S1-like domain.

The protein belongs to the IF-1 family. As to quaternary structure, component of the 30S ribosomal translation pre-initiation complex which assembles on the 30S ribosome in the order IF-2 and IF-3, IF-1 and N-formylmethionyl-tRNA(fMet); mRNA recruitment can occur at any time during PIC assembly.

It is found in the cytoplasm. Its function is as follows. One of the essential components for the initiation of protein synthesis. Stabilizes the binding of IF-2 and IF-3 on the 30S subunit to which N-formylmethionyl-tRNA(fMet) subsequently binds. Helps modulate mRNA selection, yielding the 30S pre-initiation complex (PIC). Upon addition of the 50S ribosomal subunit IF-1, IF-2 and IF-3 are released leaving the mature 70S translation initiation complex. The polypeptide is Translation initiation factor IF-1 2 (Bordetella avium (strain 197N)).